A 1062-amino-acid polypeptide reads, in one-letter code: Carbamoyl phosphate synthase large chain (1062 aa).

The carboxyphosphate synthetic domain stretch occupies residues 1-401 (MPKRTDIHKI…AMQKAVQSLE (401 aa)). Positions 129, 169, 175, 176, 208, 210, 215, 241, 242, 243, 284, and 298 each coordinate ATP. Residues 133–327 (KELCQKLGEP…IAKMAAKIAI (195 aa)) form the ATP-grasp 1 domain. The Mg(2+) site is built by Gln-284, Glu-298, and Asn-300. Mn(2+)-binding residues include Gln-284, Glu-298, and Asn-300. An oligomerization domain region spans residues 402 to 546 (IDEKDLYSAK…YSTYDGENES (145 aa)). Positions 547–929 (RKSGKKSVIV…ALYKAFAGAK (383 aa)) are carbamoyl phosphate synthetic domain. The 191-residue stretch at 671–861 (DQIIKSLHLH…MAQVATRVIM (191 aa)) folds into the ATP-grasp 2 domain. 10 residues coordinate ATP: Arg-707, Asp-746, Leu-748, Glu-752, Gly-777, Val-778, His-779, Ser-780, Gln-820, and Glu-832. Mg(2+) contacts are provided by Gln-820, Glu-832, and Asn-834. Mn(2+) contacts are provided by Gln-820, Glu-832, and Asn-834. The region spanning 930–1062 (MQLPENGNVL…NRSFATDALK (133 aa)) is the MGS-like domain. The interval 930-1062 (MQLPENGNVL…NRSFATDALK (133 aa)) is allosteric domain.

This sequence belongs to the CarB family. In terms of assembly, composed of two chains; the small (or glutamine) chain promotes the hydrolysis of glutamine to ammonia, which is used by the large (or ammonia) chain to synthesize carbamoyl phosphate. Tetramer of heterodimers (alpha,beta)4. Requires Mg(2+) as cofactor. It depends on Mn(2+) as a cofactor.

The catalysed reaction is hydrogencarbonate + L-glutamine + 2 ATP + H2O = carbamoyl phosphate + L-glutamate + 2 ADP + phosphate + 2 H(+). It catalyses the reaction hydrogencarbonate + NH4(+) + 2 ATP = carbamoyl phosphate + 2 ADP + phosphate + 2 H(+). It functions in the pathway amino-acid biosynthesis; L-arginine biosynthesis; carbamoyl phosphate from bicarbonate: step 1/1. It participates in pyrimidine metabolism; UMP biosynthesis via de novo pathway; (S)-dihydroorotate from bicarbonate: step 1/3. Large subunit of the glutamine-dependent carbamoyl phosphate synthetase (CPSase). CPSase catalyzes the formation of carbamoyl phosphate from the ammonia moiety of glutamine, carbonate, and phosphate donated by ATP, constituting the first step of 2 biosynthetic pathways, one leading to arginine and/or urea and the other to pyrimidine nucleotides. The large subunit (synthetase) binds the substrates ammonia (free or transferred from glutamine from the small subunit), hydrogencarbonate and ATP and carries out an ATP-coupled ligase reaction, activating hydrogencarbonate by forming carboxy phosphate which reacts with ammonia to form carbamoyl phosphate. This Lactobacillus delbrueckii subsp. bulgaricus (strain ATCC BAA-365 / Lb-18) protein is Carbamoyl phosphate synthase large chain.